Consider the following 278-residue polypeptide: Endoplasmic reticulum junction formation protein lunapark (278 aa).

Over 1-45 (MFSALGKWVRGSRNDKDFVTKYTADLSQITSQIHQLDVALKKSQS) the chain is Cytoplasmic. Residues 46–66 (ILSQWQSNLTFYGIALTVLAL) form a helical membrane-spanning segment. Topologically, residues 67-77 (SYTYWEYHGYR) are lumenal. A helical membrane pass occupies residues 78–98 (PYLVVTALLCIGSLILFKWAL). Topologically, residues 99 to 278 (TKLYAFYNNN…PSQSEKEKTK (180 aa)) are cytoplasmic. Positions 107-183 (NNRLRKLAKL…ELEKFKKESH (77 aa)) form a coiled coil. The C4-type; plays a role in ER morphology zinc-finger motif lies at 223–247 (CPQCHWKSNCYRLASKPIIFICPHC). Positions 258–278 (EDAIEAKQPAQPSQSEKEKTK) are disordered.

It belongs to the lunapark family. Interacts with RTN1; this interaction is negatively regulated by SEY1. Interacts with SEY1 and YOP1.

It is found in the endoplasmic reticulum membrane. Functionally, plays a role in tubular endoplasmic reticulum network formation and maintenance. Works in conjunction with the ER shaping proteins (reticulons RTN1 and RTN2, YOP1), and in antagonism to SEY1 to maintain the network in a dynamic equilibrium. May counterbalance SEY1-directed polygon formation by promoting polygon loss through ring closure. The chain is Endoplasmic reticulum junction formation protein lunapark (LNP1) from Saccharomyces cerevisiae (strain ATCC 204508 / S288c) (Baker's yeast).